The chain runs to 434 residues: Serine/threonine transporter SstT (434 aa).

The next 9 helical transmembrane spans lie at 14-34 (IVIG…WSFI), 41-61 (FVGA…MSAI), 72-92 (FGTV…AAVA), 135-155 (ALVE…GSGL), 172-192 (TVSA…VGLL), 210-230 (LLML…PFMV), 282-302 (ISIP…VSIM), 316-336 (IFLA…VSGI), and 351-371 (FGIS…IGVV). The disordered stretch occupies residues 413 to 434 (GKGTAEVVTPEKTNEAEESEQV).

The protein belongs to the dicarboxylate/amino acid:cation symporter (DAACS) (TC 2.A.23) family.

It localises to the cell membrane. The enzyme catalyses L-serine(in) + Na(+)(in) = L-serine(out) + Na(+)(out). It catalyses the reaction L-threonine(in) + Na(+)(in) = L-threonine(out) + Na(+)(out). Functionally, involved in the import of serine and threonine into the cell, with the concomitant import of sodium (symport system). This chain is Serine/threonine transporter SstT, found in Lacticaseibacillus casei (strain BL23) (Lactobacillus casei).